The following is a 197-amino-acid chain: Large ribosomal subunit protein bL25 (197 aa).

This sequence belongs to the bacterial ribosomal protein bL25 family. CTC subfamily. Part of the 50S ribosomal subunit; part of the 5S rRNA/L5/L18/L25 subcomplex. Contacts the 5S rRNA. Binds to the 5S rRNA independently of L5 and L18.

Functionally, this is one of the proteins that binds to the 5S RNA in the ribosome where it forms part of the central protuberance. The sequence is that of Large ribosomal subunit protein bL25 from Pseudomonas putida (strain GB-1).